The following is a 369-amino-acid chain: Lipoyl synthase, mitochondrial (369 aa).

Residues 1–32 constitute a mitochondrion transit peptide; the sequence is MLTKGVRALAWSPRRYITLDAEAAKPVVAKRR. Cysteine 106, cysteine 111, cysteine 117, cysteine 136, cysteine 140, cysteine 143, and serine 351 together coordinate [4Fe-4S] cluster. A Radical SAM core domain is found at 121-340; it reads NKGSATATIM…KEKALELGFL (220 aa).

It belongs to the radical SAM superfamily. Lipoyl synthase family. The cofactor is [4Fe-4S] cluster.

It localises to the mitochondrion. The enzyme catalyses [[Fe-S] cluster scaffold protein carrying a second [4Fe-4S](2+) cluster] + N(6)-octanoyl-L-lysyl-[protein] + 2 oxidized [2Fe-2S]-[ferredoxin] + 2 S-adenosyl-L-methionine + 4 H(+) = [[Fe-S] cluster scaffold protein] + N(6)-[(R)-dihydrolipoyl]-L-lysyl-[protein] + 4 Fe(3+) + 2 hydrogen sulfide + 2 5'-deoxyadenosine + 2 L-methionine + 2 reduced [2Fe-2S]-[ferredoxin]. It participates in protein modification; protein lipoylation via endogenous pathway; protein N(6)-(lipoyl)lysine from octanoyl-[acyl-carrier-protein]: step 2/2. Its function is as follows. Catalyzes the radical-mediated insertion of two sulfur atoms into the C-6 and C-8 positions of the octanoyl moiety bound to the lipoyl domains of lipoate-dependent enzymes, thereby converting the octanoylated domains into lipoylated derivatives. The polypeptide is Lipoyl synthase, mitochondrial (Eremothecium gossypii (strain ATCC 10895 / CBS 109.51 / FGSC 9923 / NRRL Y-1056) (Yeast)).